Reading from the N-terminus, the 624-residue chain is DNA damage response protein Mdb1 (624 aa).

3 disordered regions span residues 177–237 (ERIP…DDES), 249–386 (GETK…KNKH), and 591–624 (IGKR…EQRT). Basic and acidic residues-rich tracts occupy residues 200–217 (DEKL…HSSD) and 225–235 (EDQKQLNKTDD). Polar residues predominate over residues 250 to 263 (ETKSPSSVSQSLSG). A phosphoserine mark is found at Ser253 and Ser283. Low complexity predominate over residues 294 to 305 (NISDSSIKNNSI). Basic and acidic residues-rich tracts occupy residues 306–316 (HSDEVNPEVRP) and 325–352 (EESK…REAE). Polar residues predominate over residues 356–386 (ISTNYSFPSSSLEDQPDKNVQSSAVENKNKH). The BRCT domain occupies 376-468 (QSSAVENKNK…KVLDFRSYKY (93 aa)).

In terms of assembly, homodimer. Interacts (via BRCT domain) with hta1 peptide containing the S/T-Q motif in vitro; this interaction requires phosphorylation of the hta1 peptide at the S/T-Q motif.

It is found in the nucleus. It localises to the chromosome. Its subcellular location is the cytoplasm. The protein resides in the cytoskeleton. The protein localises to the spindle. Involved in DNA damage response (DDR) mediated through its interaction with phosphorylated H2A proteins hta1 and hta2 which mark the discrete foci of DNA damage. The polypeptide is DNA damage response protein Mdb1 (Schizosaccharomyces pombe (strain 972 / ATCC 24843) (Fission yeast)).